We begin with the raw amino-acid sequence, 166 residues long: Large ribosomal subunit protein uL10 (166 aa).

The protein belongs to the universal ribosomal protein uL10 family. As to quaternary structure, part of the ribosomal stalk of the 50S ribosomal subunit. The N-terminus interacts with L11 and the large rRNA to form the base of the stalk. The C-terminus forms an elongated spine to which L12 dimers bind in a sequential fashion forming a multimeric L10(L12)X complex.

Its function is as follows. Forms part of the ribosomal stalk, playing a central role in the interaction of the ribosome with GTP-bound translation factors. This chain is Large ribosomal subunit protein uL10, found in Pseudomonas entomophila (strain L48).